Reading from the N-terminus, the 308-residue chain is F420-non-reducing hydrogenase subunit G (308 aa).

Belongs to the [NiFe]/[NiFeSe] hydrogenase small subunit family. The F420-non-reducing hydrogenase is composed of three subunits; MvhA, MvhD and MvhG. It forms a complex with the heterodisulfide reductase (hdr).

Its function is as follows. Part of a complex that provides reducing equivalents for heterodisulfide reductase. This Methanothermobacter thermautotrophicus (strain ATCC 29096 / DSM 1053 / JCM 10044 / NBRC 100330 / Delta H) (Methanobacterium thermoautotrophicum) protein is F420-non-reducing hydrogenase subunit G (mvhG).